Here is a 161-residue protein sequence, read N- to C-terminus: Nucleotide-binding protein Swoo_3646 (161 aa).

This sequence belongs to the YajQ family.

Nucleotide-binding protein. The chain is Nucleotide-binding protein Swoo_3646 from Shewanella woodyi (strain ATCC 51908 / MS32).